The primary structure comprises 382 residues: S-adenosylmethionine synthase (382 aa).

His16 contacts ATP. Asp18 serves as a coordination point for Mg(2+). K(+) is bound at residue Glu44. Residues Glu57 and Gln100 each contribute to the L-methionine site. Residues 100–110 (QSPDIAQGVDN) form a flexible loop region. ATP is bound by residues 165–167 (DAK), 231–232 (RF), Asp240, 246–247 (RK), and Lys267. Asp240 contacts L-methionine. Lys271 provides a ligand contact to L-methionine.

It belongs to the AdoMet synthase family. In terms of assembly, homotetramer; dimer of dimers. Mg(2+) serves as cofactor. Requires K(+) as cofactor.

The protein localises to the cytoplasm. It carries out the reaction L-methionine + ATP + H2O = S-adenosyl-L-methionine + phosphate + diphosphate. Its pathway is amino-acid biosynthesis; S-adenosyl-L-methionine biosynthesis; S-adenosyl-L-methionine from L-methionine: step 1/1. Its function is as follows. Catalyzes the formation of S-adenosylmethionine (AdoMet) from methionine and ATP. The overall synthetic reaction is composed of two sequential steps, AdoMet formation and the subsequent tripolyphosphate hydrolysis which occurs prior to release of AdoMet from the enzyme. This is S-adenosylmethionine synthase from Legionella pneumophila (strain Lens).